The following is a 66-amino-acid chain: DNA-directed RNA polymerase subunit omega (66 aa).

Belongs to the RNA polymerase subunit omega family. In terms of assembly, the RNAP catalytic core consists of 2 alpha, 1 beta, 1 beta' and 1 omega subunit. When a sigma factor is associated with the core the holoenzyme is formed, which can initiate transcription.

The enzyme catalyses RNA(n) + a ribonucleoside 5'-triphosphate = RNA(n+1) + diphosphate. Promotes RNA polymerase assembly. Latches the N- and C-terminal regions of the beta' subunit thereby facilitating its interaction with the beta and alpha subunits. This is DNA-directed RNA polymerase subunit omega from Clostridium botulinum (strain Eklund 17B / Type B).